A 102-amino-acid polypeptide reads, in one-letter code: Small ribosomal subunit protein uS10m (102 aa).

Belongs to the universal ribosomal protein uS10 family.

The protein localises to the mitochondrion. This Marchantia polymorpha (Common liverwort) protein is Small ribosomal subunit protein uS10m (RPS10).